We begin with the raw amino-acid sequence, 1237 residues long: Cilia- and flagella-associated protein 61 (1237 aa).

Residues 278–301 form a disordered region; sequence QDLSVRRSQDAELRSSSQGSQKIV. The segment covering 281-290 has biased composition (basic and acidic residues); sequence SVRRSQDAEL.

In terms of assembly, component of axonemal radial spokes, the protein complexes that link the outer microtubule doublets with the central pair of microtubules. Interacts with CFAP91/MAATS1, ODAD2/ARMC4, RSPH3A, ROPN1, ROPN1L and RSPH9. Interacts with DYNLT1, DYNC1I2 and TUBB3. Interacts with WDR35, IFT22 and IFT81.

The protein localises to the cytoplasm. The protein resides in the cytoskeleton. Its subcellular location is the flagellum axoneme. In terms of biological role, involved in sperm flagellum assembly. Plays an essential role in the formation of the radial spokes in flagellum axoneme. The polypeptide is Cilia- and flagella-associated protein 61 (Homo sapiens (Human)).